Here is a 420-residue protein sequence, read N- to C-terminus: Maturation protein A2 (420 aa).

3 RNA-binding regions span residues 158–176 (IKYL…RAVK), 226–236 (QNRHDKIQRLL), and 294–298 (PVSDW).

This sequence belongs to the Leviviricetes maturation protein family. Interacts with host MurA; this interaction inhibits the first step in host cell wall synthesis. Interacts with the capsid protein.

It localises to the virion. Functionally, induces host cell lysis. Inhibits host MurA activity thereby blocking the synthesis of murein precursors necessary for the host cell wall biosynthesis. May be responsible for the attachment to the host pilus. Makes extensive contacts with the viral genome. The polypeptide is Maturation protein A2 (Escherichia virus Qbeta (Bacteriophage Q-beta)).